A 494-amino-acid chain; its full sequence is Membrane-bound lytic murein transglycosylase F (494 aa).

Residues 1–20 (MIKYLYVILLGLLLSGCQPA) form the signal peptide. The tract at residues 21–259 (EVVEIEASPK…HLNEKYFGHV (239 aa)) is non-LT domain. An LT domain region spans residues 260 to 494 (KRFDYVDTRA…LKPKLGAGQP (235 aa)). The active site involves Glu304. A compositionally biased stretch (polar residues) spans 473 to 485 (QSLASDSKTNNTL). A disordered region spans residues 473 to 494 (QSLASDSKTNNTLKPKLGAGQP).

The protein in the N-terminal section; belongs to the bacterial solute-binding protein 3 family. It in the C-terminal section; belongs to the transglycosylase Slt family.

It localises to the cell outer membrane. The catalysed reaction is Exolytic cleavage of the (1-&gt;4)-beta-glycosidic linkage between N-acetylmuramic acid (MurNAc) and N-acetylglucosamine (GlcNAc) residues in peptidoglycan, from either the reducing or the non-reducing ends of the peptidoglycan chains, with concomitant formation of a 1,6-anhydrobond in the MurNAc residue.. In terms of biological role, murein-degrading enzyme that degrades murein glycan strands and insoluble, high-molecular weight murein sacculi, with the concomitant formation of a 1,6-anhydromuramoyl product. Lytic transglycosylases (LTs) play an integral role in the metabolism of the peptidoglycan (PG) sacculus. Their lytic action creates space within the PG sacculus to allow for its expansion as well as for the insertion of various structures such as secretion systems and flagella. This chain is Membrane-bound lytic murein transglycosylase F, found in Shewanella denitrificans (strain OS217 / ATCC BAA-1090 / DSM 15013).